Reading from the N-terminus, the 119-residue chain is Protein yippee-like 3 (119 aa).

The Yippee domain occupies arginine 19–asparagine 116. Zn(2+) contacts are provided by cysteine 23, cysteine 26, cysteine 79, and cysteine 82.

The protein belongs to the yippee family.

It is found in the nucleus. Its subcellular location is the nucleolus. Its function is as follows. May be involved in proliferation and apoptosis in myeloid precursor cells. This chain is Protein yippee-like 3 (ypel3), found in Oryzias latipes (Japanese rice fish).